A 110-amino-acid chain; its full sequence is Prothymosin alpha (110 aa).

Met1 carries the post-translational modification N-acetylmethionine. Residues 1–110 (MSDAAVDTSS…TKKQKTDEDD (110 aa)) form a disordered region. An N-acetylserine; in Prothymosin alpha, N-terminally processed modification is found at Ser2. Ser2 carries the phosphoserine modification. Residue Thr8 is modified to Phosphothreonine. A phosphoserine mark is found at Ser9 and Ser10. Phosphothreonine is present on residues Thr13 and Thr14. Over residues 13–31 (TTKDLKEKKEVVEEAENGR) the composition is skewed to basic and acidic residues. Lys15 carries the post-translational modification N6-acetyllysine; alternate. An N6-succinyllysine; alternate modification is found at Lys15. The segment covering 42 to 83 (ENGEQEADNEVDEEEEEGGEEEEEEEEGDGEEEDGDEDEEAE) has biased composition (acidic residues). A compositionally biased stretch (basic and acidic residues) spans 100-110 (DTKKQKTDEDD). At Thr101 the chain carries Phosphothreonine. N6-acetyllysine; alternate is present on Lys102. Lys102 is covalently cross-linked (Glycyl lysine isopeptide (Lys-Gly) (interchain with G-Cter in SUMO2); alternate). Phosphothreonine is present on Thr106.

It belongs to the pro/parathymosin family. As to quaternary structure, interacts with NUPR1; regulates apoptotic process. Post-translationally, covalently linked to a small RNA of about 20 nucleotides.

Its subcellular location is the nucleus. In terms of biological role, prothymosin alpha may mediate immune function by conferring resistance to certain opportunistic infections. The chain is Prothymosin alpha (PTMA) from Pongo abelii (Sumatran orangutan).